Reading from the N-terminus, the 132-residue chain is Phosphoribosyl-AMP cyclohydrolase (132 aa).

Mg(2+) is bound at residue Asp76. Residue Cys77 coordinates Zn(2+). Mg(2+)-binding residues include Asp78 and Asp80. Positions 93 and 100 each coordinate Zn(2+).

Belongs to the PRA-CH family. As to quaternary structure, homodimer. The cofactor is Mg(2+). Zn(2+) serves as cofactor.

Its subcellular location is the cytoplasm. It catalyses the reaction 1-(5-phospho-beta-D-ribosyl)-5'-AMP + H2O = 1-(5-phospho-beta-D-ribosyl)-5-[(5-phospho-beta-D-ribosylamino)methylideneamino]imidazole-4-carboxamide. It participates in amino-acid biosynthesis; L-histidine biosynthesis; L-histidine from 5-phospho-alpha-D-ribose 1-diphosphate: step 3/9. In terms of biological role, catalyzes the hydrolysis of the adenine ring of phosphoribosyl-AMP. This chain is Phosphoribosyl-AMP cyclohydrolase, found in Methanobrevibacter smithii (strain ATCC 35061 / DSM 861 / OCM 144 / PS).